Here is an 815-residue protein sequence, read N- to C-terminus: TBC1 domain family member 5 (815 aa).

S44 is modified (phosphoserine). Residues 56–64 (MKEWEELFV) are required for interaction with retromer; involved in interaction with ATG8 family proteins. An LIR 1 motif is present at residues 57–62 (KEWEEL). In terms of domain architecture, Rab-GAP TBC spans 81 to 359 (LRSSRFRSIC…VVWDALFADS (279 aa)). R448 carries the post-translational modification Asymmetric dimethylarginine; alternate. Residue R448 is modified to Omega-N-methylarginine; alternate. Position 460 is a phosphoserine (S460). Residues 475-591 (PGSMGGPVPG…SATKKDSFFS (117 aa)) are disordered. Low complexity-rich tracts occupy residues 483-492 (PGNNSSSSFS) and 510-539 (QQQQ…QQQQ). S546, S563, S565, S568, S578, and S608 each carry phosphoserine. Over residues 556–568 (SSKTISSSPSIES) the composition is skewed to low complexity. Disordered stretches follow at residues 702-733 (SGQD…PDDF) and 754-815 (QPLL…PLDI). Residues 754–765 (QPLLTLRSTSGK) show a composition bias toward polar residues. The span at 783-796 (PASASASSSNPSSS) shows a compositional bias: low complexity. The LIR 2 motif lies at 805 to 809 (SGFTI). Residues 806–811 (GFTIVS) are required for interaction with ATG8 family proteins. A Phosphoserine modification is found at S811.

In terms of assembly, interacts with MAP1LC3A, MAP1LC3B, MAP1LC3C, GABARAP, GABARAPL1, GABARAPL2. Interacts with VPS29 and VPS35; indicative for an association with retromer CSC subcomplex. MAP1LC3A and VPS29 compete for binding to TBC1D5. Interacts with AP2M1; indicative for an association with the AP2 complex. Interacts with ULK1 and ATG13 (phosphorylated); indicative for an association with the activated ULK1-ATG13-FIP200 complex. Interacts with ATG9A; the interactions seems to be restricted to the AP2-clathrin-associated fraction of ATG9A.

Its subcellular location is the endosome membrane. The protein resides in the cytoplasmic vesicle. It is found in the autophagosome. May act as a GTPase-activating protein for Rab family protein(s). May act as a GAP for RAB7A. Can displace RAB7A and retromer CSC subcomplex from the endosomal membrane to the cytosol; at least retromer displacement seems to require its catalytic activity. Required for retrograde transport of cargo proteins from endosomes to the trans-Golgi network (TGN); the function seems to require its catalytic activity. Involved in regulation of autophagy. May act as a molecular switch between endosomal and autophagosomal transport and is involved in reprogramming vesicle trafficking upon autophagy induction. Involved in the trafficking of ATG9A upon activation of autophagy. May regulate the recruitment of ATG9A-AP2-containing vesicles to autophagic membranes. The polypeptide is TBC1 domain family member 5 (Tbc1d5) (Mus musculus (Mouse)).